Reading from the N-terminus, the 317-residue chain is DNA-directed RNA polymerase subunit alpha (317 aa).

An alpha N-terminal domain (alpha-NTD) region spans residues 1–234 (MKQFNKPEFG…SHFDVFTTLA (234 aa)). The segment at 249–317 (EEKELDKPVE…AALELTFKQN (69 aa)) is alpha C-terminal domain (alpha-CTD).

The protein belongs to the RNA polymerase alpha chain family. In terms of assembly, homodimer. The RNAP catalytic core consists of 2 alpha, 1 beta, 1 beta' and 1 omega subunit. When a sigma factor is associated with the core the holoenzyme is formed, which can initiate transcription.

The catalysed reaction is RNA(n) + a ribonucleoside 5'-triphosphate = RNA(n+1) + diphosphate. Functionally, DNA-dependent RNA polymerase catalyzes the transcription of DNA into RNA using the four ribonucleoside triphosphates as substrates. This is DNA-directed RNA polymerase subunit alpha from Mesoplasma florum (strain ATCC 33453 / NBRC 100688 / NCTC 11704 / L1) (Acholeplasma florum).